The primary structure comprises 388 residues: Lipid-A-disaccharide synthase (388 aa).

Belongs to the LpxB family.

It carries out the reaction a lipid X + a UDP-2-N,3-O-bis[(3R)-3-hydroxyacyl]-alpha-D-glucosamine = a lipid A disaccharide + UDP + H(+). The protein operates within bacterial outer membrane biogenesis; LPS lipid A biosynthesis. Condensation of UDP-2,3-diacylglucosamine and 2,3-diacylglucosamine-1-phosphate to form lipid A disaccharide, a precursor of lipid A, a phosphorylated glycolipid that anchors the lipopolysaccharide to the outer membrane of the cell. This Saccharophagus degradans (strain 2-40 / ATCC 43961 / DSM 17024) protein is Lipid-A-disaccharide synthase.